Reading from the N-terminus, the 194-residue chain is dTTP/UTP pyrophosphatase (194 aa).

Asp-73 serves as the catalytic Proton acceptor.

Belongs to the Maf family. YhdE subfamily. It depends on a divalent metal cation as a cofactor.

The protein resides in the cytoplasm. It carries out the reaction dTTP + H2O = dTMP + diphosphate + H(+). The enzyme catalyses UTP + H2O = UMP + diphosphate + H(+). Functionally, nucleoside triphosphate pyrophosphatase that hydrolyzes dTTP and UTP. May have a dual role in cell division arrest and in preventing the incorporation of modified nucleotides into cellular nucleic acids. This is dTTP/UTP pyrophosphatase from Clostridium botulinum (strain Okra / Type B1).